Consider the following 491-residue polypeptide: [Pyruvate dehydrogenase (acetyl-transferring)] kinase 2, mitochondrial (491 aa).

The Histidine kinase domain occupies 153 to 480 (PTIRTLEDAS…DVVLKLGNLM (328 aa)). ATP-binding positions include 300–307 (EILRNTYE), aspartate 341, 359–360 (SK), and 383–446 (DEVH…GIGL).

The protein belongs to the PDK/BCKDK protein kinase family. In terms of assembly, interacts with PKP1.

It is found in the mitochondrion matrix. The catalysed reaction is L-seryl-[pyruvate dehydrogenase E1 alpha subunit] + ATP = O-phospho-L-seryl-[pyruvate dehydrogenase E1 alpha subunit] + ADP + H(+). Functionally, inhibits the mitochondrial pyruvate dehydrogenase complex by phosphorylation of the E1 alpha subunit (PDA1), thus contributing to the regulation of glucose metabolism. This chain is [Pyruvate dehydrogenase (acetyl-transferring)] kinase 2, mitochondrial, found in Saccharomyces cerevisiae (strain ATCC 204508 / S288c) (Baker's yeast).